We begin with the raw amino-acid sequence, 293 residues long: AA9 family lytic polysaccharide monooxygenase E (293 aa).

The first 19 residues, Met1–Ala19, serve as a signal peptide directing secretion. 2 residues coordinate Cu(2+): His20 and His90. A disulfide bridge links Cys59 with Cys172. Residues His158 and Gln167 each coordinate O2. A Cu(2+)-binding site is contributed by Tyr169. One can recognise a CBM1 domain in the interval Cys257–Val293.

The protein belongs to the polysaccharide monooxygenase AA9 family. It depends on Cu(2+) as a cofactor.

It localises to the secreted. It carries out the reaction [(1-&gt;4)-beta-D-glucosyl]n+m + reduced acceptor + O2 = 4-dehydro-beta-D-glucosyl-[(1-&gt;4)-beta-D-glucosyl]n-1 + [(1-&gt;4)-beta-D-glucosyl]m + acceptor + H2O.. Its activity is regulated as follows. Glucose dehydrogenase and aryl-alcohol quinone oxidoreductases regulate the oxidative degradation of cellulose since they can act as catalytically efficient electron donors for LPMO9E. Lytic polysaccharide monooxygenase (LPMO) that depolymerizes crystalline and amorphous polysaccharides via the oxidation of scissile alpha- or beta-(1-4)-glycosidic bonds, yielding only C1 oxidation products. Catalysis by LPMOs requires the reduction of the active-site copper from Cu(II) to Cu(I) by a reducing agent and H(2)O(2) or O(2) as a cosubstrate. Improves the progression of lytic enzymes in delignified miscanthus cell walls. This boosting effect dependents on the cellular type which indicates contrasted recalcitrance levels in plant tissues. This Podospora anserina (strain S / ATCC MYA-4624 / DSM 980 / FGSC 10383) (Pleurage anserina) protein is AA9 family lytic polysaccharide monooxygenase E.